The primary structure comprises 321 residues: Cytochrome c biogenesis protein CcsA (321 aa).

Helical transmembrane passes span Ile17–Ile37, Lys43–Ser63, Met143–Ile163, Val225–Asn245, Glu258–Arg275, and Ile287–Gly307.

The protein belongs to the CcmF/CycK/Ccl1/NrfE/CcsA family. May interact with Ccs1.

It is found in the plastid. Its subcellular location is the chloroplast thylakoid membrane. Required during biogenesis of c-type cytochromes (cytochrome c6 and cytochrome f) at the step of heme attachment. The chain is Cytochrome c biogenesis protein CcsA from Drimys granadensis.